The sequence spans 175 residues: Co-chaperone protein daf-41 (175 aa).

Residues 2 to 89 enclose the CS domain; the sequence is AKQPTVLWAQ…KTPAWWPRLL (88 aa). The segment at 109 to 175 is disordered; it reads DEDDEAEDAG…EEEGKNGTRA (67 aa). Residues 148–168 show a composition bias toward acidic residues; the sequence is GLEDDEEDDDMPDLEDNEEEE.

The protein belongs to the p23/wos2 family. Expressed in anterior and posterior neurons including ASE, AWC, ASI and ADL amphids and phasmid sensory neurons, peripheral neurons and ventral cord motorneurons. Additionally expressed in body wall muscle, pharynx, vulva, germ cells and intestine.

Functionally, co-chaperone for hsp90/daf-21. Involved in regulation of longevity, larval entry and exit from the dauer stage of development and response to environmental cues, such as oxidative stress, in a temperature-dependent manner. Role in daf-16 and hsf-1 inhibition at elevated temperatures. This chain is Co-chaperone protein daf-41, found in Caenorhabditis elegans.